The chain runs to 90 residues: Phosphocarrier protein HPr (90 aa).

Positions 1 to 89 (MPAREITIIN…ELINNFFDEG (89 aa)) constitute an HPr domain. The active-site Pros-phosphohistidine intermediate is the histidine 15.

Belongs to the HPr family.

It localises to the cytoplasm. In terms of biological role, general (non sugar-specific) component of the phosphoenolpyruvate-dependent sugar phosphotransferase system (sugar PTS). This major carbohydrate active-transport system catalyzes the phosphorylation of incoming sugar substrates concomitantly with their translocation across the cell membrane. The phosphoryl group from phosphoenolpyruvate (PEP) is transferred to the phosphoryl carrier protein HPr by enzyme I. Phospho-HPr then transfers it to the PTS EIIA domain. The chain is Phosphocarrier protein HPr (ptsH) from Pseudomonas putida (Arthrobacter siderocapsulatus).